The following is a 464-amino-acid chain: Asparagine--tRNA ligase (464 aa).

It belongs to the class-II aminoacyl-tRNA synthetase family. As to quaternary structure, homodimer.

Its subcellular location is the cytoplasm. The catalysed reaction is tRNA(Asn) + L-asparagine + ATP = L-asparaginyl-tRNA(Asn) + AMP + diphosphate + H(+). The polypeptide is Asparagine--tRNA ligase (Xanthomonas campestris pv. campestris (strain 8004)).